A 63-amino-acid polypeptide reads, in one-letter code: Large ribosomal subunit protein uL30 (63 aa).

Belongs to the universal ribosomal protein uL30 family. Part of the 50S ribosomal subunit.

This is Large ribosomal subunit protein uL30 from Stenotrophomonas maltophilia (strain K279a).